Here is a 105-residue protein sequence, read N- to C-terminus: MKESLMIYFNIENSSDIHEFLKIAVAKNDVDYPFLEWIKEKGIPRLKNIDFNKLPNDDRFLAMIEFDEFVLQNEMDFEDPEEVRGCIISTVNSLKEYINICHNKT.

This is an uncharacterized protein from Bacillus subtilis (strain 168).